The sequence spans 225 residues: Pyridoxine/pyridoxamine 5'-phosphate oxidase (225 aa).

Substrate-binding positions include 21-24 and K79; that span reads RKSY. FMN-binding positions include 74 to 79, 89 to 90, R95, and K96; these read RVVLIK and YT. Residues Y136, R140, and S144 each coordinate substrate. FMN is bound by residues 153 to 154 and W197; that span reads QS. Residue 203–205 participates in substrate binding; the sequence is RLH. R207 contributes to the FMN binding site.

The protein belongs to the pyridoxamine 5'-phosphate oxidase family. In terms of assembly, homodimer. Requires FMN as cofactor.

The enzyme catalyses pyridoxamine 5'-phosphate + O2 + H2O = pyridoxal 5'-phosphate + H2O2 + NH4(+). It carries out the reaction pyridoxine 5'-phosphate + O2 = pyridoxal 5'-phosphate + H2O2. Its pathway is cofactor metabolism; pyridoxal 5'-phosphate salvage; pyridoxal 5'-phosphate from pyridoxamine 5'-phosphate: step 1/1. It participates in cofactor metabolism; pyridoxal 5'-phosphate salvage; pyridoxal 5'-phosphate from pyridoxine 5'-phosphate: step 1/1. Functionally, catalyzes the oxidation of either pyridoxine 5'-phosphate (PNP) or pyridoxamine 5'-phosphate (PMP) into pyridoxal 5'-phosphate (PLP). The sequence is that of Pyridoxine/pyridoxamine 5'-phosphate oxidase from Paracidovorax citrulli (strain AAC00-1) (Acidovorax citrulli).